A 229-amino-acid chain; its full sequence is uncharacterized protein (229 aa).

The ABC transporter domain occupies 2–229 (LTLNNISKSY…LDERGDISHA (228 aa)). Position 38–45 (38–45 (GPSGSGKS)) interacts with ATP.

Belongs to the ABC transporter superfamily.

This is an uncharacterized protein from Bacillus subtilis (strain 168).